We begin with the raw amino-acid sequence, 197 residues long: Tyrosine-protein phosphatase-like protein OCA2 (197 aa).

The Tyrosine-protein phosphatase domain maps to 10–160; it reads SPVVSTDVSL…FETNLKIPRN (151 aa). Position 181 is a phosphoserine (S181).

It belongs to the protein-tyrosine phosphatase family.

Its subcellular location is the cytoplasm. Required for normal growth in the presence of linoleic acid hydroperoxide (LoaOOH). In Saccharomyces cerevisiae (strain ATCC 204508 / S288c) (Baker's yeast), this protein is Tyrosine-protein phosphatase-like protein OCA2 (OCA2).